We begin with the raw amino-acid sequence, 652 residues long: Nitrate reductase-like protein NarX (652 aa).

Residues 1–251 are nitrate reductase alpha subunit; that stretch reads MTVTPRTGSR…FGDQTDVPES (251 aa). Residues 53–117 enclose the 4Fe-4S Mo/W bis-MGD-type domain; the sequence is DKVVRSTHGV…AFSWYTYSPT (65 aa). [4Fe-4S] cluster contacts are provided by H60, C64, C68, and C103. D233 contacts Mo-bis(molybdopterin guanine dinucleotide). Residues 258-415 form a nitrate reductase delta subunit region; sequence VWQCASVLLT…TVAAVCRTGD (158 aa). Helical transmembrane passes span 416 to 436, 466 to 486, 504 to 524, 545 to 565, and 595 to 615; these read MMGELFWTVVPYVTMTIVAVG, PMFHFGILVVIVGHGIGLVIP, AVVLGSIAGITTLAGVTLLIY, LVLVAAIVAGLGATALGSGVV, and APLYYQIHVLIGLALFALWPF. The tract at residues 416–652 is nitrate reductase gamma subunit; the sequence is MMGELFWTVV…VLTRPRRRGW (237 aa). H469 and H479 together coordinate heme b. Heme b contacts are provided by H602 and H620.

In the N-terminal section; belongs to the nitrate reductase alpha subunit family. The protein in the central section; belongs to the NarJ/NarW family. This sequence in the C-terminal section; belongs to the nitrate reductase gamma subunit family. The cofactor is [4Fe-4S] cluster. Requires Mo-bis(molybdopterin guanine dinucleotide) as cofactor. Heme b serves as cofactor.

The protein resides in the cell membrane. Its function is as follows. Does not seem to have nitrate reductase activity. This Mycobacterium tuberculosis (strain CDC 1551 / Oshkosh) protein is Nitrate reductase-like protein NarX (narX).